The primary structure comprises 89 residues: Small ribosomal subunit protein uS15 (89 aa).

It belongs to the universal ribosomal protein uS15 family. Part of the 30S ribosomal subunit. Forms a bridge to the 50S subunit in the 70S ribosome, contacting the 23S rRNA.

One of the primary rRNA binding proteins, it binds directly to 16S rRNA where it helps nucleate assembly of the platform of the 30S subunit by binding and bridging several RNA helices of the 16S rRNA. In terms of biological role, forms an intersubunit bridge (bridge B4) with the 23S rRNA of the 50S subunit in the ribosome. The sequence is that of Small ribosomal subunit protein uS15 from Rhodococcus erythropolis (strain PR4 / NBRC 100887).